The following is a 423-amino-acid chain: Transmembrane protein 130 (423 aa).

A signal peptide spans 1-24 (MAQAVWSRLGRILWLSCLLPWAPA). The Extracellular portion of the chain corresponds to 25–339 (GVAAGLYELN…IQVWPSRIQP (315 aa)). Asn-34, Asn-197, and Asn-300 each carry an N-linked (GlcNAc...) asparagine glycan. The PKD domain occupies 147-233 (WPSSYLTKTI…AVMQKTGDFS (87 aa)). The chain crosses the membrane as a helical span at residues 340–360 (AVFAFPCATLITVMLAFIMYM). Residues 361–423 (TLRNATQQKD…LYKSVKTYTV (63 aa)) are Cytoplasmic-facing.

It localises to the golgi apparatus membrane. This Pongo abelii (Sumatran orangutan) protein is Transmembrane protein 130 (TMEM130).